A 79-amino-acid chain; its full sequence is Small ribosomal subunit protein bS16 (79 aa).

Belongs to the bacterial ribosomal protein bS16 family.

This chain is Small ribosomal subunit protein bS16, found in Nitratidesulfovibrio vulgaris (strain DSM 19637 / Miyazaki F) (Desulfovibrio vulgaris).